The sequence spans 184 residues: Dynactin subunit 6 (184 aa).

This sequence belongs to the dynactin subunits 5/6 family. Dynactin subunit 6 subfamily. Subunit of dynactin, a multiprotein complex part of a tripartite complex with dynein and a adapter, such as BICDL1, BICD2 or HOOK3. The dynactin complex is built around ACTR1A/ACTB filament and consists of an actin-related filament composed of a shoulder domain, a pointed end and a barbed end.

It is found in the cytoplasm. The protein resides in the cytoskeleton. In terms of biological role, part of the dynactin complex that activates the molecular motor dynein for ultra-processive transport along microtubules. The chain is Dynactin subunit 6 (dctn6) from Nematostella vectensis (Starlet sea anemone).